We begin with the raw amino-acid sequence, 75 residues long: Kappa-scoloptoxin(03)-Ssm1d (75 aa).

The first 23 residues, 1 to 23, serve as a signal peptide directing secretion; it reads MKLSMAILLVMALIIFTLDKNYS.

Belongs to the scoloptoxin-03 family. In terms of processing, contains 3 disulfide bonds. As to expression, expressed by the venom gland.

The protein localises to the secreted. In terms of biological role, inhibits voltage-gated potassium channels. The polypeptide is Kappa-scoloptoxin(03)-Ssm1d (Scolopendra mutilans (Chinese red-headed centipede)).